The chain runs to 197 residues: Suppressor of RNA silencing p3 (197 aa).

Belongs to the tenuiviruses p3 protein family. Homodimer.

It localises to the host cytoplasm. Its function is as follows. Acts as a suppressor of RNA-mediated gene silencing, also known as post-transcriptional gene silencing (PTGS), presumably through the binding of dsRNA. This chain is Suppressor of RNA silencing p3, found in Rottboellia (Sorghum).